We begin with the raw amino-acid sequence, 120 residues long: Ribosome-binding factor A (120 aa).

The protein belongs to the RbfA family. In terms of assembly, monomer. Binds 30S ribosomal subunits, but not 50S ribosomal subunits or 70S ribosomes.

Its subcellular location is the cytoplasm. Functionally, one of several proteins that assist in the late maturation steps of the functional core of the 30S ribosomal subunit. Associates with free 30S ribosomal subunits (but not with 30S subunits that are part of 70S ribosomes or polysomes). Required for efficient processing of 16S rRNA. May interact with the 5'-terminal helix region of 16S rRNA. This is Ribosome-binding factor A from Borrelia garinii subsp. bavariensis (strain ATCC BAA-2496 / DSM 23469 / PBi) (Borreliella bavariensis).